We begin with the raw amino-acid sequence, 366 residues long: Phospho-N-acetylmuramoyl-pentapeptide-transferase (366 aa).

A run of 10 helical transmembrane segments spans residues A27–L47, T71–A91, L93–F113, L134–S154, L174–G194, G205–A225, L245–P265, A268–V288, V297–F317, and Q343–L363.

It belongs to the glycosyltransferase 4 family. MraY subfamily. The cofactor is Mg(2+).

It is found in the cell inner membrane. It carries out the reaction UDP-N-acetyl-alpha-D-muramoyl-L-alanyl-gamma-D-glutamyl-meso-2,6-diaminopimeloyl-D-alanyl-D-alanine + di-trans,octa-cis-undecaprenyl phosphate = di-trans,octa-cis-undecaprenyl diphospho-N-acetyl-alpha-D-muramoyl-L-alanyl-D-glutamyl-meso-2,6-diaminopimeloyl-D-alanyl-D-alanine + UMP. The protein operates within cell wall biogenesis; peptidoglycan biosynthesis. Functionally, catalyzes the initial step of the lipid cycle reactions in the biosynthesis of the cell wall peptidoglycan: transfers peptidoglycan precursor phospho-MurNAc-pentapeptide from UDP-MurNAc-pentapeptide onto the lipid carrier undecaprenyl phosphate, yielding undecaprenyl-pyrophosphoryl-MurNAc-pentapeptide, known as lipid I. This Sinorhizobium fredii (strain NBRC 101917 / NGR234) protein is Phospho-N-acetylmuramoyl-pentapeptide-transferase.